The chain runs to 223 residues: Pyridoxine/pyridoxamine 5'-phosphate oxidase (223 aa).

Substrate-binding positions include 13-16 (RKNY) and Lys73. FMN-binding positions include 68–73 (RIVLLK), 83–84 (YT), Lys90, and Gln112. Substrate contacts are provided by Tyr130, Arg134, and Ser138. Residues 147–148 (QS) and Trp193 each bind FMN. Substrate is bound at residue 199–201 (RLH). Arg203 is a binding site for FMN.

Belongs to the pyridoxamine 5'-phosphate oxidase family. In terms of assembly, homodimer. The cofactor is FMN.

The enzyme catalyses pyridoxamine 5'-phosphate + O2 + H2O = pyridoxal 5'-phosphate + H2O2 + NH4(+). It catalyses the reaction pyridoxine 5'-phosphate + O2 = pyridoxal 5'-phosphate + H2O2. Its pathway is cofactor metabolism; pyridoxal 5'-phosphate salvage; pyridoxal 5'-phosphate from pyridoxamine 5'-phosphate: step 1/1. The protein operates within cofactor metabolism; pyridoxal 5'-phosphate salvage; pyridoxal 5'-phosphate from pyridoxine 5'-phosphate: step 1/1. In terms of biological role, catalyzes the oxidation of either pyridoxine 5'-phosphate (PNP) or pyridoxamine 5'-phosphate (PMP) into pyridoxal 5'-phosphate (PLP). This is Pyridoxine/pyridoxamine 5'-phosphate oxidase from Rhodopirellula baltica (strain DSM 10527 / NCIMB 13988 / SH1).